A 383-amino-acid polypeptide reads, in one-letter code: Probable lipid transporter atnI (383 aa).

Transmembrane regions (helical) follow at residues 46-66 and 71-91; these read VLFS…AIMF and AWVV…RSLF. N-linked (GlcNAc...) asparagine glycosylation is present at asparagine 94. Helical transmembrane passes span 104-124, 144-164, 182-202, 231-251, and 269-289; these read FTIF…MTLG, FGHI…VGAA, IYMG…GLFI, WLFY…IFRL, and WFEY…LNVA. Residues 305 to 383 are disordered; the sequence is VSRKEKKQRK…YDNRGNEVRP (79 aa). Positions 307–316 are enriched in basic residues; that stretch reads RKEKKQRKRE. Over residues 317–329 the composition is skewed to basic and acidic residues; sequence KKEAKIAEKEAKK.

This sequence belongs to the lipid-translocating exporter (LTE) (TC 9.A.26.1) family.

It is found in the membrane. Its pathway is secondary metabolite biosynthesis. Probable lipid transporter; part of the gene cluster that mediates the biosynthesis of aspercryptins, linear lipopeptides built from six amino acids including 2 highly unusual and nonproteogenic amino acids, 2-amino-octanoic acid (2aoa) and 2-amino-dodecanol (2adol). The core structure of aspercryptins is as follows: Ser/Ala-Thr-Ile/Val-2aoa-Asn-2adol. The first step of aspercryptin biosynthesis is the generation of the fatty acid precursors, octanoic and dodecanoic acids, by the FAS subunits atnF and atnM. The fatty acid precursors are likely transformed into the corresponding alpha-amino fatty acids in three steps. First, they are hydroxylated by the cytochrome P450 monooxygenase atnE, then oxidized to the corresponding alpha-keto acids by the NAD(P)-dependent oxidoreductase atnD, and finally converted to the alpha-amino fatty acids by the PLP-dependent aminotransferases atnH or atnJ. the alpha-amino fatty acids, 2-amino-octanoic and 2-amino-dodecanoic acids, are recognized, activated, and covalently tethered to the NRPS atnA by its fourth and sixth adenylation domains. The second module of atnA is the Thr module and contains an epimerase (E) domain responsible for the epimerization of Thr to D-allo-Thr. Additionally, despite atnA having only one epimerase domain, the first amino acid of aspercryptin A1 is D-Ser, suggesting that serine is either loaded directly as D-Ser on the first module or that the epimerase domain in the threonine module epimerizes both L-Ser and L-Thr. After condensation of the hexapeptide of aspercryptin, the C-terminal reductase (TE) domain might be involved in the reductive release and production of the aldehyde hexapeptide. Further reduction would generate aspercryptins. The variety of aspercryptins produced reflects the flexibility of the atnA NRPS, allowing incorporation of alanine instead of serine, valine for isoleucine, and a C10 fatty amino alcohol instead of the C12 version. AtnB seems to be involved in the selectivity for Ile versus Val by the third module. Moreover, type B, C and D aspercryptins have an additional N-terminal cichorine, acetyl and propionyl group respectively. The polypeptide is Probable lipid transporter atnI (Emericella nidulans (strain FGSC A4 / ATCC 38163 / CBS 112.46 / NRRL 194 / M139) (Aspergillus nidulans)).